The primary structure comprises 128 residues: Infection structure-specific protein 56 (128 aa).

Composition is skewed to polar residues over residues 27 to 36 (HATYPQSQPH) and 87 to 101 (TSIS…DSQS). Disordered stretches follow at residues 27–48 (HATY…AVPS) and 86–128 (GTSI…STSA). A compositionally biased stretch (basic and acidic residues) spans 115–128 (KDAKKELKDPSTSA).

Its function is as follows. General role in the development of germlings including formation of the infection structures. This is Infection structure-specific protein 56 (INF56) from Uromyces appendiculatus (Rust fungus).